Here is a 446-residue protein sequence, read N- to C-terminus: Tubulin gamma chain (446 aa).

GTP is bound at residue 142-148; the sequence is AGGTGSG.

It belongs to the tubulin family.

It localises to the cytoplasm. Its subcellular location is the cytoskeleton. The protein resides in the microtubule organizing center. The protein localises to the spindle pole body. Functionally, tubulin is the major constituent of microtubules. The gamma chain is found at microtubule organizing centers (MTOC) such as the spindle poles or the centrosome, suggesting that it is involved in the minus-end nucleation of microtubule assembly. This is Tubulin gamma chain (tug1) from Schizosaccharomyces japonicus (Fission yeast).